A 353-amino-acid polypeptide reads, in one-letter code: UDP-N-acetylenolpyruvoylglucosamine reductase (353 aa).

Positions 31 to 201 (LASHAPAFVA…GSVRFALPRP (171 aa)) constitute an FAD-binding PCMH-type domain. Residue Arg177 is part of the active site. The Proton donor role is filled by Ser250. Glu346 is a catalytic residue.

Belongs to the MurB family. It depends on FAD as a cofactor.

The protein resides in the cytoplasm. The enzyme catalyses UDP-N-acetyl-alpha-D-muramate + NADP(+) = UDP-N-acetyl-3-O-(1-carboxyvinyl)-alpha-D-glucosamine + NADPH + H(+). It functions in the pathway cell wall biogenesis; peptidoglycan biosynthesis. In terms of biological role, cell wall formation. The sequence is that of UDP-N-acetylenolpyruvoylglucosamine reductase from Bordetella parapertussis (strain 12822 / ATCC BAA-587 / NCTC 13253).